We begin with the raw amino-acid sequence, 406 residues long: Isocitrate dehydrogenase [NADP] (406 aa).

Lysine 72, threonine 75, threonine 77, and arginine 82 together coordinate NADP(+). Residues serine 94, asparagine 96, arginine 100, glutamate 110, and arginine 132 each coordinate D-threo-isocitrate. 3 residues coordinate Mn(2+): aspartate 250, aspartate 273, and aspartate 277. NADP(+) is bound by residues glycine 308, threonine 309, valine 310, histidine 313, and asparagine 326.

Belongs to the isocitrate and isopropylmalate dehydrogenases family. As to quaternary structure, homodimer. Requires Mg(2+) as cofactor. Mn(2+) is required as a cofactor.

The enzyme catalyses D-threo-isocitrate + NADP(+) = 2-oxoglutarate + CO2 + NADPH. Catalyzes the oxidative decarboxylation of isocitrate to 2-oxoglutarate and carbon dioxide with the concomitant reduction of NADP(+). The protein is Isocitrate dehydrogenase [NADP] (icd) of Sphingobium yanoikuyae (Sphingomonas yanoikuyae).